We begin with the raw amino-acid sequence, 352 residues long: Probable tyrosine-protein kinase DDB_G0290471 (352 aa).

Residues 51–333 (IEYVCRLGSG…ISLNQIRSFY (283 aa)) enclose the Protein kinase domain. ATP contacts are provided by residues 57-65 (LGSGSLCRV) and K78. The Proton acceptor role is filled by D175.

The protein belongs to the protein kinase superfamily. TKL Tyr protein kinase family.

The enzyme catalyses L-tyrosyl-[protein] + ATP = O-phospho-L-tyrosyl-[protein] + ADP + H(+). The chain is Probable tyrosine-protein kinase DDB_G0290471 from Dictyostelium discoideum (Social amoeba).